The primary structure comprises 256 residues: 1-(5-phosphoribosyl)-5-[(5-phosphoribosylamino)methylideneamino] imidazole-4-carboxamide isomerase (256 aa).

Residue Asp8 is the Proton acceptor of the active site. The active-site Proton donor is Asp129.

It belongs to the HisA/HisF family.

It is found in the cytoplasm. It carries out the reaction 1-(5-phospho-beta-D-ribosyl)-5-[(5-phospho-beta-D-ribosylamino)methylideneamino]imidazole-4-carboxamide = 5-[(5-phospho-1-deoxy-D-ribulos-1-ylimino)methylamino]-1-(5-phospho-beta-D-ribosyl)imidazole-4-carboxamide. Its pathway is amino-acid biosynthesis; L-histidine biosynthesis; L-histidine from 5-phospho-alpha-D-ribose 1-diphosphate: step 4/9. This is 1-(5-phosphoribosyl)-5-[(5-phosphoribosylamino)methylideneamino] imidazole-4-carboxamide isomerase from Synechococcus elongatus (strain ATCC 33912 / PCC 7942 / FACHB-805) (Anacystis nidulans R2).